A 203-amino-acid polypeptide reads, in one-letter code: dTTP/UTP pyrophosphatase (203 aa).

Asp74 functions as the Proton acceptor in the catalytic mechanism.

This sequence belongs to the Maf family. YhdE subfamily. Requires a divalent metal cation as cofactor.

It localises to the cytoplasm. It carries out the reaction dTTP + H2O = dTMP + diphosphate + H(+). It catalyses the reaction UTP + H2O = UMP + diphosphate + H(+). Its function is as follows. Nucleoside triphosphate pyrophosphatase that hydrolyzes dTTP and UTP. May have a dual role in cell division arrest and in preventing the incorporation of modified nucleotides into cellular nucleic acids. The polypeptide is dTTP/UTP pyrophosphatase (Treponema denticola (strain ATCC 35405 / DSM 14222 / CIP 103919 / JCM 8153 / KCTC 15104)).